The primary structure comprises 397 residues: G2/mitotic-specific cyclin-B2 (397 aa).

Disordered stretches follow at residues 1–20 (MALL…DTGV) and 64–97 (KVTH…PEDV). Position 8 is a phosphothreonine (threonine 8). Serine 11 bears the Phosphoserine mark. Polar residues predominate over residues 64–74 (KVTHVNKQPKP). Phosphoserine occurs at positions 77, 98, and 391.

It belongs to the cyclin family. Cyclin AB subfamily. In terms of assembly, interacts with the CDK1 protein kinase to form a serine/threonine kinase holoenzyme complex also known as maturation promoting factor (MPF). The cyclin subunit imparts substrate specificity to the complex.

Essential for the control of the cell cycle at the G2/M (mitosis) transition. This is G2/mitotic-specific cyclin-B2 (CCNB2) from Mesocricetus auratus (Golden hamster).